The following is a 446-amino-acid chain: Tubulin beta-2 chain (446 aa).

8 residues coordinate GTP: Gln11, Glu69, Ser138, Gly142, Thr143, Gly144, Asn204, and Asn226. Mg(2+) is bound at residue Glu69. Positions 424 to 446 (QYQEATADEEGEFDEDEEGGGDE) are disordered. The span at 429–446 (TADEEGEFDEDEEGGGDE) shows a compositional bias: acidic residues.

It belongs to the tubulin family. In terms of assembly, dimer of alpha and beta chains. A typical microtubule is a hollow water-filled tube with an outer diameter of 25 nm and an inner diameter of 15 nM. Alpha-beta heterodimers associate head-to-tail to form protofilaments running lengthwise along the microtubule wall with the beta-tubulin subunit facing the microtubule plus end conferring a structural polarity. Microtubules usually have 13 protofilaments but different protofilament numbers can be found in some organisms and specialized cells. The cofactor is Mg(2+).

It is found in the cytoplasm. The protein localises to the cytoskeleton. Functionally, tubulin is the major constituent of microtubules, a cylinder consisting of laterally associated linear protofilaments composed of alpha- and beta-tubulin heterodimers. Microtubules grow by the addition of GTP-tubulin dimers to the microtubule end, where a stabilizing cap forms. Below the cap, tubulin dimers are in GDP-bound state, owing to GTPase activity of alpha-tubulin. This Drosophila erecta (Fruit fly) protein is Tubulin beta-2 chain (betaTub85D).